The sequence spans 649 residues: Serine/threonine-protein kinase par-4 (649 aa).

Residues 1-11 (MEGPSSSSVPT) show a composition bias toward polar residues. The disordered stretch occupies residues 1–132 (MEGPSSSSVP…DEEAETPEEQ (132 aa)). Basic and acidic residues predominate over residues 45 to 55 (NTEKMEKEKKP). 2 stretches are compositionally biased toward acidic residues: residues 64-77 (PDYDYDEEDGGSCE) and 117-129 (DDMEDDDEEAETP). The 264-residue stretch at 197-460 (YLWGGIIGTG…ISDVMQHPWF (264 aa)) folds into the Protein kinase domain. ATP-binding positions include 203–211 (IGTGSYGKV) and Lys-226. Asp-324 functions as the Proton acceptor in the catalytic mechanism. Positions 548-649 (TLEKRPGDGP…CIFRSRTDSS (102 aa)) are disordered. Low complexity predominate over residues 597 to 609 (AVEVVEAVAAPEA).

The protein belongs to the protein kinase superfamily. CAMK Ser/Thr protein kinase family. LKB1 subfamily. It depends on Mg(2+) as a cofactor. Requires Mn(2+) as cofactor.

It localises to the cytoplasm. It is found in the cell cortex. The enzyme catalyses L-seryl-[protein] + ATP = O-phospho-L-seryl-[protein] + ADP + H(+). It catalyses the reaction L-threonyl-[protein] + ATP = O-phospho-L-threonyl-[protein] + ADP + H(+). In terms of biological role, required for cytoplasmic partitioning and asymmetric cell division in early embryogenesis. Phosphorylates and restricts the asymmetry effectors mex-5 and mex-6 to the anterior cytoplasm of the zygote and maintains these phosphorylations until fertilization. Phosphorylates and regulates aak-2 in response to oxidative stress. May also play a role in motility, behavioral response, regulation of lifespan and dauer formation through this pathway. The sequence is that of Serine/threonine-protein kinase par-4 from Caenorhabditis briggsae.